Reading from the N-terminus, the 980-residue chain is Putative helicase 087L (980 aa).

A Helicase ATP-binding domain is found at 59–246; sequence INPHTLYDGV…IDLFNLILRT (188 aa). Position 72-79 (72-79) interacts with ATP; sequence HEMGTGKT. The DEAH box motif lies at 189–192; the sequence is DEAH. The Helicase C-terminal domain maps to 389–546; sequence RLSFVFSEFV…SIDLHMYEIA (158 aa).

This sequence belongs to the IIV-6 022L family. SNF2/RAD54 helicase subfamily.

The protein is Putative helicase 087L of Invertebrate iridescent virus 3 (IIV-3).